Reading from the N-terminus, the 238-residue chain is Fish-egg lectin (238 aa).

5 tandem repeats follow at residues Leu1–Asp34, Asn35–Ser68, Gly69–Asn106, Asn107–Ser156, and Gly157–Gly199. The segment at Leu1–Gly199 is 5 X approximate tandem repeats. 4 cysteine pairs are disulfide-bonded: Cys3/Cys234, Cys100/Cys153, Cys128/Cys133, and Cys208/Cys226. Asn27 is a glycosylation site (N-linked (GlcNAc...) asparagine).

It belongs to the tectonin family. As to expression, expressed in the eggs.

It localises to the secreted. Functionally, lipopolysaccharide-binding protein with a very low agglutinating activity for human A-type erythrocytes and interacts with both Gram-positive and Gram-negative bacteria. In Cyprinus carpio (Common carp), this protein is Fish-egg lectin.